Here is a 366-residue protein sequence, read N- to C-terminus: Galactoside alpha-(1,2)-fucosyltransferase 1 (366 aa).

The Cytoplasmic segment spans residues methionine 1–histidine 8. Residues leucine 9–phenylalanine 25 traverse the membrane as a helical; Signal-anchor for type II membrane protein segment. The Lumenal segment spans residues leucine 26–proline 366. Residues asparagine 66, asparagine 302, and asparagine 328 are each glycosylated (N-linked (GlcNAc...) asparagine).

It belongs to the glycosyltransferase 11 family.

Its subcellular location is the golgi apparatus. It is found in the golgi stack membrane. It catalyses the reaction a beta-D-galactosyl-(1-&gt;4)-N-acetyl-beta-D-glucosaminyl derivative + GDP-beta-L-fucose = an alpha-L-Fuc-(1-&gt;2)-beta-D-Gal-(1-&gt;4)-beta-D-GlcNAc derivative + GDP + H(+). It carries out the reaction a ganglioside GA1 + GDP-beta-L-fucose = a ganglioside Fuc-GA1 + GDP + H(+). The catalysed reaction is a beta-D-Gal-(1-&gt;3)-beta-D-GlcNAc-(1-&gt;3)-beta-D-Gal-(1-&gt;4)-beta-D-Glc-(1&lt;-&gt;1')-Cer(d18:1(4E)) + GDP-beta-L-fucose = alpha-L-fucosyl-(1-&gt;2)- beta-D-galactosyl-(1-&gt;3)-N-acetyl-beta-D-glucosaminyl-(1-&gt;3)-beta-D-galactosyl-(1-&gt;4)-beta-D-glucosyl-(1&lt;-&gt;1')-N-acylsphing-4-enine + GDP + H(+). The enzyme catalyses a neolactoside nLc4Cer(d18:1(4E)) + GDP-beta-L-fucose = a neolactoside IV(2)-alpha-Fuc-nLc4Cer(d18:1(4E)) + GDP + H(+). It catalyses the reaction a ganglioside GM1 + GDP-beta-L-fucose = a ganglioside Fuc-GM1 + GDP + H(+). It carries out the reaction beta-D-galactosyl-(1-&gt;3)-N-acetyl-D-galactosamine + GDP-beta-L-fucose = alpha-L-fucosyl-(1-&gt;2)-beta-D-galactosyl-(1-&gt;3)-N-acetyl-D-galactosamine + GDP + H(+). The protein operates within protein modification; protein glycosylation. Functionally, catalyzes the transfer of L-fucose, from a guanosine diphosphate-beta-L-fucose, to the terminal galactose residue of glycoconjugates through an alpha(1,2) linkage leading to H antigen synthesis that is an intermediate substrate in the synthesis of ABO blood group antigens. H antigen is essential for maturation of the glomerular layer of the main olfactory bulb, in cell migration and early cell-cell contacts during tumor associated angiogenesis. Preferentially fucosylates soluble lactose and to a lesser extent fucosylates glycolipids gangliosides GA1 and GM1a. This chain is Galactoside alpha-(1,2)-fucosyltransferase 1, found in Ateles belzebuth (White-bellied spider monkey).